We begin with the raw amino-acid sequence, 282 residues long: Putative SWIB domain-containing protein 070L (282 aa).

Low complexity predominate over residues 1–16 (MFQTTPKQVKPTTVPK). Residues 1-21 (MFQTTPKQVKPTTVPKTGRKN) form a disordered region. Residues 97–181 (GLEKPRMISE…QKYLKHCFDE (85 aa)) form the SWIB/MDM2 domain. The disordered stretch occupies residues 199-282 (TDDQTTAEEA…KVKKEHKIKK (84 aa)). Positions 262–275 (GKKDKENIPLEKVK) are enriched in basic and acidic residues.

This sequence belongs to the IIV-6 306R family.

This chain is Putative SWIB domain-containing protein 070L, found in Invertebrate iridescent virus 3 (IIV-3).